A 451-amino-acid polypeptide reads, in one-letter code: Epi-neemfruitin B 7-O-acetyltransferse L7AT (451 aa).

Active-site proton acceptor residues include His165 and Asp384.

This sequence belongs to the plant acyltransferase family. As to quaternary structure, monomer. As to expression, mainly expressed in petioles and, to a lower extent, in roots.

It carries out the reaction epi-neemfruitin B + acetyl-CoA = 7-acetyl-epi-neemfruitin B + CoA. The protein operates within secondary metabolite biosynthesis; terpenoid biosynthesis. Its function is as follows. Acetyltransferase involved in the biosynthesis of limonoids triterpene natural products such as azadirachtin, an antifeedant widely used as bioinsecticide, and possessing many medicinal applications including anti-tumoral, anti-malarial, anti-rheumatic, antibacterial, anti-inflammatory, anti-pyretic and diuretic effects. Catalyzes the formation of 7-acetyl-epi-neemfruitin B from epi-neemfruitin B. The sequence is that of Epi-neemfruitin B 7-O-acetyltransferse L7AT from Melia azedarach (Chinaberry tree).